The chain runs to 392 residues: Phosphoglycerate kinase (392 aa).

Residues 21-23 (DMN), R36, 59-62 (HLGR), R114, and R147 each bind substrate. Residues K198, E320, and 346 to 349 (GGDT) contribute to the ATP site.

It belongs to the phosphoglycerate kinase family. As to quaternary structure, monomer.

The protein localises to the cytoplasm. It carries out the reaction (2R)-3-phosphoglycerate + ATP = (2R)-3-phospho-glyceroyl phosphate + ADP. The protein operates within carbohydrate degradation; glycolysis; pyruvate from D-glyceraldehyde 3-phosphate: step 2/5. The protein is Phosphoglycerate kinase of Neisseria meningitidis serogroup C (strain 053442).